A 267-amino-acid chain; its full sequence is Translation initiation factor 2 subunit alpha (267 aa).

Residues 17–88 (GEIVIGTVKR…KRGHIDLSIK (72 aa)) enclose the S1 motif domain.

Belongs to the eIF-2-alpha family. Heterotrimer composed of an alpha, a beta and a gamma chain.

Its function is as follows. eIF-2 functions in the early steps of protein synthesis by forming a ternary complex with GTP and initiator tRNA. The sequence is that of Translation initiation factor 2 subunit alpha (eif2a) from Archaeoglobus fulgidus (strain ATCC 49558 / DSM 4304 / JCM 9628 / NBRC 100126 / VC-16).